The chain runs to 125 residues: Holo-[acyl-carrier-protein] synthase (125 aa).

The Mg(2+) site is built by D9 and E58.

It belongs to the P-Pant transferase superfamily. AcpS family. Mg(2+) is required as a cofactor.

It is found in the cytoplasm. It catalyses the reaction apo-[ACP] + CoA = holo-[ACP] + adenosine 3',5'-bisphosphate + H(+). In terms of biological role, transfers the 4'-phosphopantetheine moiety from coenzyme A to a Ser of acyl-carrier-protein. In Shewanella amazonensis (strain ATCC BAA-1098 / SB2B), this protein is Holo-[acyl-carrier-protein] synthase.